Reading from the N-terminus, the 324-residue chain is Malate dehydrogenase (324 aa).

NAD(+) contacts are provided by residues 7-13 (GAAGGIG) and aspartate 34. 2 residues coordinate substrate: arginine 88 and arginine 94. NAD(+) contacts are provided by residues asparagine 101 and 124-126 (VTN). Asparagine 126 and arginine 160 together coordinate substrate. Histidine 184 (proton acceptor) is an active-site residue. Methionine 238 is a binding site for NAD(+).

The protein belongs to the LDH/MDH superfamily. MDH type 1 family. In terms of assembly, homodimer.

The catalysed reaction is (S)-malate + NAD(+) = oxaloacetate + NADH + H(+). In terms of biological role, catalyzes the reversible oxidation of malate to oxaloacetate. The polypeptide is Malate dehydrogenase (Haemophilus ducreyi (strain 35000HP / ATCC 700724)).